Here is a 54-residue protein sequence, read N- to C-terminus: MLYYVLVFLVVALVAGALGFGGIAGASAGIAQILFFFFLALLVISLIASAIRKA.

Transmembrane regions (helical) follow at residues 5–25 and 29–48; these read VLVF…GIAG and GIAQ…SLIA.

This sequence belongs to the UPF0391 family.

Its subcellular location is the cell membrane. This is UPF0391 membrane protein BMEI0373 from Brucella melitensis biotype 1 (strain ATCC 23456 / CCUG 17765 / NCTC 10094 / 16M).